A 264-amino-acid chain; its full sequence is tRNA (guanine-N(1)-)-methyltransferase (264 aa).

S-adenosyl-L-methionine contacts are provided by residues Gly-116 and 136-141 (VGDFVL).

It belongs to the RNA methyltransferase TrmD family. Homodimer.

It localises to the cytoplasm. It carries out the reaction guanosine(37) in tRNA + S-adenosyl-L-methionine = N(1)-methylguanosine(37) in tRNA + S-adenosyl-L-homocysteine + H(+). Its function is as follows. Specifically methylates guanosine-37 in various tRNAs. The polypeptide is tRNA (guanine-N(1)-)-methyltransferase (Koribacter versatilis (strain Ellin345)).